The sequence spans 247 residues: MSDSPLIAFPRGCITGTFIRRVKRFSVEMETAGAGAPERVWIHSNNSGSMLGLLRAGAPVLASPAANPARKLKWTQELAGLDGMWVGVNTQTPNRLLEAAFHAGRLPWAAGYTMFRREARCGASRLDARMDAPQDSGLPPLWVECKNVTMVEDDVAAFPDAATERGQKHLREMMEIVRQGQRAAMFYLVQRADGHCFGPADYVDPVYAGLFYEAAAAGVEMYPHRALVSEHGIDLGPLLPVVPPPGV.

Belongs to the SfsA family.

The protein is Sugar fermentation stimulation protein homolog of Oleidesulfovibrio alaskensis (strain ATCC BAA-1058 / DSM 17464 / G20) (Desulfovibrio alaskensis).